Consider the following 279-residue polypeptide: Shikimate dehydrogenase (NADP(+)) (279 aa).

Residues 18-20 (SRS) and Thr64 contribute to the shikimate site. Catalysis depends on Lys68, which acts as the Proton acceptor. An NADP(+)-binding site is contributed by Glu80. The shikimate site is built by Asn89 and Asp104. Residues 129-133 (GAGGA), 153-158 (NRTVSR), and Ile218 contribute to the NADP(+) site. Shikimate is bound at residue Tyr220. Residue Gly241 participates in NADP(+) binding.

This sequence belongs to the shikimate dehydrogenase family. As to quaternary structure, homodimer.

The catalysed reaction is shikimate + NADP(+) = 3-dehydroshikimate + NADPH + H(+). Its pathway is metabolic intermediate biosynthesis; chorismate biosynthesis; chorismate from D-erythrose 4-phosphate and phosphoenolpyruvate: step 4/7. Its function is as follows. Involved in the biosynthesis of the chorismate, which leads to the biosynthesis of aromatic amino acids. Catalyzes the reversible NADPH linked reduction of 3-dehydroshikimate (DHSA) to yield shikimate (SA). This is Shikimate dehydrogenase (NADP(+)) from Chelativorans sp. (strain BNC1).